We begin with the raw amino-acid sequence, 97 residues long: YcgL domain-containing protein PST_1364 (97 aa).

A YcgL domain is found at L3–P87.

This chain is YcgL domain-containing protein PST_1364, found in Stutzerimonas stutzeri (strain A1501) (Pseudomonas stutzeri).